Here is a 194-residue protein sequence, read N- to C-terminus: Peroxiredoxin 2 (194 aa).

The Thioredoxin domain maps to Pro-2–Tyr-160. Cys-47 (cysteine sulfenic acid (-SOH) intermediate) is an active-site residue. At Thr-193 the chain carries Phosphothreonine. A Phosphoserine modification is found at Ser-194.

Belongs to the peroxiredoxin family. AhpC/Prx1 subfamily. As to quaternary structure, homodimer; disulfide-linked, upon oxidation. 5 homodimers assemble to form a ring-like decamer. Also exists as a monomer. In terms of processing, the enzyme can be inactivated by further oxidation of the cysteine sulfenic acid (C(P)-SOH) to sulphinic acid (C(P)-SO2H) instead of its condensation to a disulfide bond. It can be reactivated by forming a transient disulfide bond with sulfiredoxin SRXN1, which reduces the cysteine sulfinic acid in an ATP- and Mg-dependent manner. Post-translationally, conjugated to URM1, a ubiquitin-like protein. As to expression, detected in the head and body (at protein level).

It is found in the cytoplasm. It catalyses the reaction a hydroperoxide + [thioredoxin]-dithiol = an alcohol + [thioredoxin]-disulfide + H2O. In terms of biological role, thiol-specific peroxidase that catalyzes the reduction of hydrogen peroxide and organic hydroperoxides to water and alcohols, respectively. Plays a role in cell protection against oxidative stress by detoxifying peroxides and as sensor of hydrogen peroxide-mediated signaling events. Might participate in the signaling cascades of growth factors and tumor necrosis factor-alpha by regulating the intracellular concentrations of H(2)O(2). Reduces an intramolecular disulfide bond in GDPD5 that gates the ability to GDPD5 to drive postmitotic motor neuron differentiation. In Drosophila melanogaster (Fruit fly), this protein is Peroxiredoxin 2.